Here is a 152-residue protein sequence, read N- to C-terminus: Transcriptional regulator MraZ (152 aa).

2 consecutive SpoVT-AbrB domains span residues 5–52 (AHAI…PLCE) and 81–124 (ASEC…SETR).

The protein belongs to the MraZ family. In terms of assembly, forms oligomers.

Its subcellular location is the cytoplasm. It is found in the nucleoid. In Tolumonas auensis (strain DSM 9187 / NBRC 110442 / TA 4), this protein is Transcriptional regulator MraZ.